The chain runs to 179 residues: Crossover junction endodeoxyribonuclease RuvC (179 aa).

Catalysis depends on residues D7, E67, and D139. Mg(2+) is bound by residues D7, E67, and D139.

This sequence belongs to the RuvC family. In terms of assembly, homodimer which binds Holliday junction (HJ) DNA. The HJ becomes 2-fold symmetrical on binding to RuvC with unstacked arms; it has a different conformation from HJ DNA in complex with RuvA. In the full resolvosome a probable DNA-RuvA(4)-RuvB(12)-RuvC(2) complex forms which resolves the HJ. The cofactor is Mg(2+).

The protein resides in the cytoplasm. It carries out the reaction Endonucleolytic cleavage at a junction such as a reciprocal single-stranded crossover between two homologous DNA duplexes (Holliday junction).. In terms of biological role, the RuvA-RuvB-RuvC complex processes Holliday junction (HJ) DNA during genetic recombination and DNA repair. Endonuclease that resolves HJ intermediates. Cleaves cruciform DNA by making single-stranded nicks across the HJ at symmetrical positions within the homologous arms, yielding a 5'-phosphate and a 3'-hydroxyl group; requires a central core of homology in the junction. The consensus cleavage sequence is 5'-(A/T)TT(C/G)-3'. Cleavage occurs on the 3'-side of the TT dinucleotide at the point of strand exchange. HJ branch migration catalyzed by RuvA-RuvB allows RuvC to scan DNA until it finds its consensus sequence, where it cleaves and resolves the cruciform DNA. The polypeptide is Crossover junction endodeoxyribonuclease RuvC (Sorangium cellulosum (strain So ce56) (Polyangium cellulosum (strain So ce56))).